A 347-amino-acid polypeptide reads, in one-letter code: 4-hydroxy-2-oxovalerate aldolase (347 aa).

The Pyruvate carboxyltransferase domain occupies 11-262 (PVVVDTTLRD…NPGLDVFKLL (252 aa)). 19 to 20 (RD) lines the substrate pocket. Aspartate 20 lines the Mn(2+) pocket. The active-site Proton acceptor is histidine 23. 2 residues coordinate substrate: serine 173 and histidine 201. Residues histidine 201 and histidine 203 each coordinate Mn(2+). Tyrosine 292 serves as a coordination point for substrate.

This sequence belongs to the 4-hydroxy-2-oxovalerate aldolase family. Homodimer. Can also form a heterotetramer composed of two aldolase (TTHB246) and two dehydrogenase (TTHB247) subunits. Upon complex formation, the aldolase shows a 5-fold increase in substrate affinity, while the dehydrogenase shows a 3-fold decrease; the kcat values of each enzyme are reduced by 2-fold when they are in a complex. Requires Co(2+) as cofactor. Ni(2+) is required as a cofactor. Mn(2+) serves as cofactor.

The catalysed reaction is (S)-4-hydroxy-2-oxopentanoate = acetaldehyde + pyruvate. The enzyme catalyses (S)-4-hydroxy-2-oxohexanoate = propanal + pyruvate. Its activity is regulated as follows. Appears to be allosterically activated by NADH. Its function is as follows. Catalyzes the retro-aldol cleavage of both 4-hydroxy-2-oxopentanoate (HOPA) and 4-hydroxy-2-oxohexanoate (HOHA) to pyruvate and acetaldehyde or propanaldehyde, respectively. The aldehydes produced by this reaction are directly channeled to the dehydrogenase TTHB247, ensuring that these toxic aldehydes are sequestered from cellular components. Is involved in the meta-cleavage pathway for the degradation of aromatic compounds. Appears to be stereospecific since it can cleave (4S)-4-hydroxy-2-oxopentanoate but not the (4R) isomer. Is not able to catalyze the aldol addition of 2-oxobutyrate with acetaldehyde; this indicates that the enzyme is specific for pyruvate as the carbonyl donor. This Thermus thermophilus (strain ATCC 27634 / DSM 579 / HB8) protein is 4-hydroxy-2-oxovalerate aldolase.